Here is a 237-residue protein sequence, read N- to C-terminus: Ribonuclease PH (237 aa).

Phosphate-binding positions include R86 and 124–126 (GTR).

The protein belongs to the RNase PH family. As to quaternary structure, homohexameric ring arranged as a trimer of dimers.

The catalysed reaction is tRNA(n+1) + phosphate = tRNA(n) + a ribonucleoside 5'-diphosphate. Its function is as follows. Phosphorolytic 3'-5' exoribonuclease that plays an important role in tRNA 3'-end maturation. Removes nucleotide residues following the 3'-CCA terminus of tRNAs; can also add nucleotides to the ends of RNA molecules by using nucleoside diphosphates as substrates, but this may not be physiologically important. Probably plays a role in initiation of 16S rRNA degradation (leading to ribosome degradation) during starvation. This Idiomarina loihiensis (strain ATCC BAA-735 / DSM 15497 / L2-TR) protein is Ribonuclease PH.